The following is a 1072-amino-acid chain: DNA-directed RNA polymerase subunit beta (1072 aa).

This sequence belongs to the RNA polymerase beta chain family. As to quaternary structure, in plastids the minimal PEP RNA polymerase catalytic core is composed of four subunits: alpha, beta, beta', and beta''. When a (nuclear-encoded) sigma factor is associated with the core the holoenzyme is formed, which can initiate transcription.

The protein resides in the plastid. It is found in the chloroplast. The enzyme catalyses RNA(n) + a ribonucleoside 5'-triphosphate = RNA(n+1) + diphosphate. In terms of biological role, DNA-dependent RNA polymerase catalyzes the transcription of DNA into RNA using the four ribonucleoside triphosphates as substrates. The polypeptide is DNA-directed RNA polymerase subunit beta (Lemna minor (Common duckweed)).